A 430-amino-acid polypeptide reads, in one-letter code: Bone morphogenetic protein 7 (430 aa).

The signal sequence occupies residues M1–A29. The propeptide occupies D30 to R291. N-linked (GlcNAc...) asparagine glycans are attached at residues N186, N301, N320, and N371. Residues I290 to E310 form a disordered region. Disulfide bonds link C329/C395, C358/C427, and C362/C429.

This sequence belongs to the TGF-beta family. Homodimer; disulfide-linked. Interacts with SOSTDC1. Interacts with TWSG1. Interacts with FBN1 (via N-terminal domain) and FBN2. Interacts with type I receptor ACVR1. Interacts with type II receptor ACVR2A. Interacts with NOG; this interaction inhibits canonical BMP signaling. Interacts with SCUBE3. Interacts with ERFE; the interaction inhibits BMP-induced transcription of HAMP. Interacts with TGFBR3.

The protein resides in the secreted. In terms of biological role, growth factor of the TGF-beta superfamily that plays important role in various biological processes, including embryogenesis, hematopoiesis, neurogenesis and skeletal morphogenesis. Initiates the canonical BMP signaling cascade by associating with type I receptor ACVR1 and type II receptor ACVR2A. Once all three components are bound together in a complex at the cell surface, ACVR2A phosphorylates and activates ACVR1. In turn, ACVR1 propagates signal by phosphorylating SMAD1/5/8 that travel to the nucleus and act as activators and repressors of transcription of target genes. For specific functions such as growth cone collapse in developing spinal neurons and chemotaxis of monocytes, also uses BMPR2 as type II receptor. Can also signal through non-canonical pathways such as P38 MAP kinase signaling cascade that promotes brown adipocyte differentiation through activation of target genes, including members of the SOX family of transcription factors. Promotes the expression of HAMP, this is repressed by its interaction with ERFE. This is Bone morphogenetic protein 7 (Bmp7) from Mus musculus (Mouse).